The sequence spans 1139 residues: Protein kinase C-like (1139 aa).

An REM-1 1 domain is found at Met-1–Gly-67. Residues Gly-72 to Arg-132 are disordered. Positions Lys-142–Asp-219 constitute an REM-1 2 domain. Residues Ala-225–Met-343 enclose the C2 domain. The interval Val-349–Ile-404 is disordered. Polar residues predominate over residues Gly-358–Thr-368. 2 Phorbol-ester/DAG-type zinc fingers span residues Gly-454 to Cys-502 and Pro-522 to Cys-572. 3 disordered regions span residues Lys-590–Ala-637, Gln-649–Ala-668, and Gln-679–Gly-804. A compositionally biased stretch (polar residues) spans Gln-594–Thr-614. Positions Ala-615–Gly-629 are enriched in low complexity. 2 stretches are compositionally biased toward pro residues: residues Ala-723–Pro-734 and Ala-743–Pro-760. Over residues Gly-761–Gln-793 the composition is skewed to low complexity. One can recognise a Protein kinase domain in the interval Phe-814–Phe-1073. ATP contacts are provided by residues Leu-820–Val-828 and Lys-843. Asp-939 functions as the Proton acceptor in the catalytic mechanism. In terms of domain architecture, AGC-kinase C-terminal spans Arg-1074–Asp-1139.

It belongs to the protein kinase superfamily. AGC Ser/Thr protein kinase family. PKC subfamily.

The enzyme catalyses L-seryl-[protein] + ATP = O-phospho-L-seryl-[protein] + ADP + H(+). The catalysed reaction is L-threonyl-[protein] + ATP = O-phospho-L-threonyl-[protein] + ADP + H(+). With respect to regulation, stimulated about twofold by phospholipids or phorbol esters. This is Protein kinase C-like (pkc1) from Hypocrea jecorina (Trichoderma reesei).